Here is a 395-residue protein sequence, read N- to C-terminus: Transmembrane protein 79 (395 aa).

Positions 1 to 115 (MTEPETLALL…PPTKLEELPE (115 aa)) are disordered. Residues 1–204 (MTEPETLALL…GREALRAVAS (204 aa)) are Cytoplasmic-facing. A helical membrane pass occupies residues 205-225 (VGAALILFPCLLYGAYAFLPF). Residues 226–244 (DAPRLPTMSSRLIYTLRCG) are Extracellular-facing. The helical transmembrane segment at 245 to 265 (VFATFPIVLGILVYGLSLLCF) threads the bilayer. At 266 to 290 (AALRPFGEPRREVEIHRQYVAQSVQ) the chain is on the cytoplasmic side. The helical transmembrane segment at 291-311 (LFILYFFNLAVLSTYLPQDAL) threads the bilayer. Over 312-313 (KL) the chain is Extracellular. Residues 314–334 (LPLLTGLFAISRLIYWLTFAV) traverse the membrane as a helical segment. Residues 335–343 (GRSFRGFGY) are Cytoplasmic-facing. A helical membrane pass occupies residues 344–364 (GLTFLPLLSMLLWNFYYMFVV). Residues 365-395 (EPERMLTASESRLDYPDHARSASDYRPRSRG) are Extracellular-facing.

The protein localises to the lysosome. It is found in the golgi apparatus. Its subcellular location is the trans-Golgi network. The protein resides in the membrane. Contributes to the epidermal integrity and skin barrier function. Plays a role in the lamellar granule (LG) secretory system and in the stratum corneum (SC) epithelial cell formation. This is Transmembrane protein 79 (TMEM79) from Bos taurus (Bovine).